The primary structure comprises 384 residues: 4-hydroxy-3-methylbut-2-en-1-yl diphosphate synthase (flavodoxin) (384 aa).

Residues C280, C283, C315, and E322 each coordinate [4Fe-4S] cluster.

Belongs to the IspG family. [4Fe-4S] cluster serves as cofactor.

The catalysed reaction is (2E)-4-hydroxy-3-methylbut-2-enyl diphosphate + oxidized [flavodoxin] + H2O + 2 H(+) = 2-C-methyl-D-erythritol 2,4-cyclic diphosphate + reduced [flavodoxin]. It participates in isoprenoid biosynthesis; isopentenyl diphosphate biosynthesis via DXP pathway; isopentenyl diphosphate from 1-deoxy-D-xylulose 5-phosphate: step 5/6. Functionally, converts 2C-methyl-D-erythritol 2,4-cyclodiphosphate (ME-2,4cPP) into 1-hydroxy-2-methyl-2-(E)-butenyl 4-diphosphate. The protein is 4-hydroxy-3-methylbut-2-en-1-yl diphosphate synthase (flavodoxin) of Frankia alni (strain DSM 45986 / CECT 9034 / ACN14a).